We begin with the raw amino-acid sequence, 596 residues long: Probable tripeptidyl-peptidase SED2 (596 aa).

An N-terminal signal peptide occupies residues 1 to 16 (MRLLKFVCLLASVAAA). A propeptide spans 17-203 (KPTPGASHKV…LESMSVEEFA (187 aa)) (removed in mature form). The Peptidase S53 domain occupies 210 to 596 (LVTTACLREL…NFQALTKVLP (387 aa)). Residue asparagine 265 is glycosylated (N-linked (GlcNAc...) asparagine). Catalysis depends on charge relay system residues glutamate 286 and aspartate 290. Asparagine 403 carries an N-linked (GlcNAc...) asparagine glycan. Catalysis depends on serine 501, which acts as the Charge relay system. Residues aspartate 543 and isoleucine 544 each contribute to the Ca(2+) site. An N-linked (GlcNAc...) asparagine glycan is attached at asparagine 572. Glycine 576 and aspartate 578 together coordinate Ca(2+).

The cofactor is Ca(2+).

It is found in the secreted. Its subcellular location is the extracellular space. The catalysed reaction is Release of an N-terminal tripeptide from a polypeptide.. Functionally, secreted tripeptidyl-peptidase which degrades proteins at acidic pHs and is involved in virulence. This Trichophyton verrucosum (strain HKI 0517) protein is Probable tripeptidyl-peptidase SED2 (SED2).